The following is a 339-amino-acid chain: Phosphate acyltransferase (339 aa).

It belongs to the PlsX family. As to quaternary structure, homodimer. Probably interacts with PlsY.

Its subcellular location is the cytoplasm. It carries out the reaction a fatty acyl-[ACP] + phosphate = an acyl phosphate + holo-[ACP]. It participates in lipid metabolism; phospholipid metabolism. Catalyzes the reversible formation of acyl-phosphate (acyl-PO(4)) from acyl-[acyl-carrier-protein] (acyl-ACP). This enzyme utilizes acyl-ACP as fatty acyl donor, but not acyl-CoA. This is Phosphate acyltransferase from Dechloromonas aromatica (strain RCB).